Reading from the N-terminus, the 444-residue chain is Protein-serine O-palmitoleoyltransferase porcupine (444 aa).

Helical transmembrane passes span 29–49 (NGTL…FLVW), 81–101 (VMIF…KLNG), 128–150 (FLTL…FAIV), 163–183 (TLYL…YVTF), 201–221 (LGVF…AIIS), 249–269 (YFIC…IVVA), 304–324 (FFQS…LLHA), 326–346 (DYQM…ETVF), 383–403 (VLII…FTGM), and 420–440 (WTIW…FLAL). H323 is an active-site residue.

This sequence belongs to the membrane-bound acyltransferase family. Porcupine subfamily.

It localises to the membrane. It carries out the reaction [Wnt protein]-L-serine + (9Z)-hexadecenoyl-CoA = [Wnt protein]-O-(9Z)-hexadecenoyl-L-serine + CoA. In terms of biological role, key regulator of the Wnt signaling pathway that mediates lipid modification of Wnt proteins. Acts as a protein-serine O-palmitoleoyltransferase that catalyzes the attachment of palmitoleate, a 16-carbon monounsaturated fatty acid (C16:1(9Z)), to Wnt proteins. Serine palmitoleoylation of WNT proteins is required for efficient binding to frizzled receptors. Has a role in cell specification, specifically in blastomere signaling. Involved in cytosketetal polarity. Required for the orientation of mitotic spindle axis. This is Protein-serine O-palmitoleoyltransferase porcupine from Caenorhabditis briggsae.